The following is a 551-amino-acid chain: HTH-type transcriptional regulator SgrR (551 aa).

The 116-residue stretch at 1-116 (MPSARLQQQF…LVSHLGRSFR (116 aa)) folds into the HTH marR-type domain. The segment at residues 26–49 (LNELAALLSCSRRHMRTLLNTMQD) is a DNA-binding region (H-T-H motif). The tract at residues 163-492 (ELEADIAHHW…IDWQADAARW (330 aa)) is solute-binding.

Its function is as follows. Activates the small RNA gene sgrS under glucose-phosphate stress conditions as well as yfdZ. Represses its own transcription under both stress and non-stress conditions. Might act as a sensor of the intracellular accumulation of phosphoglucose by binding these molecules in its C-terminal solute-binding domain. In Shigella sonnei (strain Ss046), this protein is HTH-type transcriptional regulator SgrR.